A 340-amino-acid chain; its full sequence is Glycerol-3-phosphate dehydrogenase [NAD(P)+] (340 aa).

Positions 15, 16, 36, and 110 each coordinate NADPH. Lysine 110, glycine 139, and threonine 141 together coordinate sn-glycerol 3-phosphate. NADPH is bound at residue alanine 143. Residues lysine 196, aspartate 249, serine 259, arginine 260, and asparagine 261 each coordinate sn-glycerol 3-phosphate. The active-site Proton acceptor is lysine 196. Arginine 260 lines the NADPH pocket. Residues valine 284 and glutamate 286 each coordinate NADPH.

This sequence belongs to the NAD-dependent glycerol-3-phosphate dehydrogenase family.

The protein resides in the cytoplasm. It catalyses the reaction sn-glycerol 3-phosphate + NAD(+) = dihydroxyacetone phosphate + NADH + H(+). The enzyme catalyses sn-glycerol 3-phosphate + NADP(+) = dihydroxyacetone phosphate + NADPH + H(+). It functions in the pathway membrane lipid metabolism; glycerophospholipid metabolism. Catalyzes the reduction of the glycolytic intermediate dihydroxyacetone phosphate (DHAP) to sn-glycerol 3-phosphate (G3P), the key precursor for phospholipid synthesis. The sequence is that of Glycerol-3-phosphate dehydrogenase [NAD(P)+] from Serratia marcescens.